The chain runs to 381 residues: 1-deoxy-D-xylulose 5-phosphate reductoisomerase (381 aa).

Positions 10, 11, 12, 13, and 120 each coordinate NADPH. Lys-121 is a binding site for 1-deoxy-D-xylulose 5-phosphate. Glu-122 lines the NADPH pocket. Asp-146 serves as a coordination point for Mn(2+). 1-deoxy-D-xylulose 5-phosphate-binding residues include Ser-147, Glu-148, Ser-172, and His-195. Residue Glu-148 participates in Mn(2+) binding. Gly-201 contacts NADPH. 1-deoxy-D-xylulose 5-phosphate is bound by residues Ser-208, Asn-213, Lys-214, and Glu-217. Glu-217 is a binding site for Mn(2+).

Belongs to the DXR family. It depends on Mg(2+) as a cofactor. Requires Mn(2+) as cofactor.

It carries out the reaction 2-C-methyl-D-erythritol 4-phosphate + NADP(+) = 1-deoxy-D-xylulose 5-phosphate + NADPH + H(+). The protein operates within isoprenoid biosynthesis; isopentenyl diphosphate biosynthesis via DXP pathway; isopentenyl diphosphate from 1-deoxy-D-xylulose 5-phosphate: step 1/6. Catalyzes the NADPH-dependent rearrangement and reduction of 1-deoxy-D-xylulose-5-phosphate (DXP) to 2-C-methyl-D-erythritol 4-phosphate (MEP). The protein is 1-deoxy-D-xylulose 5-phosphate reductoisomerase of Thermodesulfovibrio yellowstonii (strain ATCC 51303 / DSM 11347 / YP87).